Here is a 122-residue protein sequence, read N- to C-terminus: Small ribosomal subunit protein uS13 (122 aa).

Residues R99–K122 are disordered.

This sequence belongs to the universal ribosomal protein uS13 family. Part of the 30S ribosomal subunit. Forms a loose heterodimer with protein S19. Forms two bridges to the 50S subunit in the 70S ribosome.

In terms of biological role, located at the top of the head of the 30S subunit, it contacts several helices of the 16S rRNA. In the 70S ribosome it contacts the 23S rRNA (bridge B1a) and protein L5 of the 50S subunit (bridge B1b), connecting the 2 subunits; these bridges are implicated in subunit movement. Contacts the tRNAs in the A and P-sites. The protein is Small ribosomal subunit protein uS13 of Rhodopseudomonas palustris (strain TIE-1).